A 262-amino-acid chain; its full sequence is tRNA pseudouridine synthase A (262 aa).

The active-site Nucleophile is aspartate 51. Position 109 (tyrosine 109) interacts with substrate.

It belongs to the tRNA pseudouridine synthase TruA family. As to quaternary structure, homodimer.

It carries out the reaction uridine(38/39/40) in tRNA = pseudouridine(38/39/40) in tRNA. Functionally, formation of pseudouridine at positions 38, 39 and 40 in the anticodon stem and loop of transfer RNAs. The chain is tRNA pseudouridine synthase A from Dechloromonas aromatica (strain RCB).